Consider the following 228-residue polypeptide: GDT1-like protein 5 (228 aa).

G2 is modified (N-acetylglycine). The next 6 membrane-spanning stretches (helical) occupy residues 12-32 (LAMTFLSEIGDKTFFAAAILA), 39-59 (LVLAGCLSALIVMTILSATLG), 71-91 (THHITTFLFFGFGLWSLWDGF), 133-153 (PFLTAFFSPIFLKAFSINFFG), 173-193 (LGVVLGGIVAQTLCTTAAVLG), and 205-225 (IVALSGGMLFIIFGIQSLLTP).

It belongs to the GDT1 family.

The protein localises to the membrane. The sequence is that of GDT1-like protein 5 from Arabidopsis thaliana (Mouse-ear cress).